A 725-amino-acid polypeptide reads, in one-letter code: Catalase-peroxidase (725 aa).

Residues Trp90–Tyr213 constitute a cross-link (tryptophyl-tyrosyl-methioninium (Trp-Tyr) (with M-239)). The active-site Proton acceptor is His91. The tryptophyl-tyrosyl-methioninium (Tyr-Met) (with W-90) cross-link spans Tyr213–Met239. His254 contributes to the heme b binding site.

Belongs to the peroxidase family. Peroxidase/catalase subfamily. Homodimer or homotetramer. The cofactor is heme b. Formation of the three residue Trp-Tyr-Met cross-link is important for the catalase, but not the peroxidase activity of the enzyme.

It catalyses the reaction H2O2 + AH2 = A + 2 H2O. The enzyme catalyses 2 H2O2 = O2 + 2 H2O. Its function is as follows. Bifunctional enzyme with both catalase and broad-spectrum peroxidase activity. This Hahella chejuensis (strain KCTC 2396) protein is Catalase-peroxidase.